We begin with the raw amino-acid sequence, 349 residues long: Thylakoid lumenal 29 kDa protein, chloroplastic (349 aa).

S155 is subject to Phosphoserine.

The protein belongs to the peroxidase family.

Its subcellular location is the plastid. The protein localises to the chloroplast thylakoid lumen. This is Thylakoid lumenal 29 kDa protein, chloroplastic (TL29) from Arabidopsis thaliana (Mouse-ear cress).